A 696-amino-acid polypeptide reads, in one-letter code: Junctophilin-2 (696 aa).

The Cytoplasmic portion of the chain corresponds to 1–674; sequence MSGGRFDFDD…EVEVEEVPNT (674 aa). MORN repeat units follow at residues 14–36, 38–59, 60–79, 82–104, 106–128, and 129–151; these read YCGGWEGGKAHGHGLCTGPKGQG, YSGSWNFGFEVAGVYTWPSGNT, FEGYWSQGKRHGLGIETKGR, YKGEWTHGFKGRYGIRQSTNSGA, YEGTWNNGLQDGYGTETYADGGT, and YQGQFTNGMRHGYGVRQSVPYGM. Phosphoserine is present on residues S162 and S165. 2 disordered regions span residues 164-192 and 246-273; these read SSLRSEHSNGTVAPDSPAADGPMLPSPPV and LSSGASDAASTGSLAEGAEGPDDAAAPF. MORN repeat units lie at residues 285-307 and 308-330; these read YMGEWKNDKRSGFGVSERSSGLR and YEGEWLDNLRHGYGRTTLPDGHR. The Bipartite nuclear localization signal motif lies at 345–359; it reads KRRVLPLKSSKVRQK. Residues 439-664 form a disordered region; the sequence is NSESLLEPPE…RKEVAQAKEA (226 aa). 3 positions are modified to phosphoserine: S440, S442, and S462. A compositionally biased stretch (basic and acidic residues) spans 457–471; the sequence is ERPRESPQLHERETP. T470 bears the Phosphothreonine mark. Over residues 474–487 the composition is skewed to pro residues; sequence EGGPPSPAGTPPQP. S479 carries the phosphoserine modification. A Phosphothreonine modification is found at T483. A Nuclear localization signal motif is present at residues 488–492; that stretch reads KRPRP. A phosphoserine mark is found at S527 and S533. The span at 573-585 shows a compositional bias: acidic residues; sequence PLEDEQEPEPEPE. 3 positions are modified to phosphoserine: S593, S597, and S613. Positions 631 to 644 are enriched in basic and acidic residues; sequence AEPKAKARKTEARG. A helical; Anchor for type IV membrane protein transmembrane segment spans residues 675–695; the sequence is VLICMVILLNIGLAILFVHLL.

It belongs to the junctophilin family. In terms of assembly, interacts with TRPC3. Interacts with BAG5 and HSPA8; the interaction with HSPA8 is increased in the presence of BAG5. Interacts with MEF2C. Proteolytically cleaved by calpain in response to cardiac stress. The major cleavage site takes place at the C-terminus and leads to the release of the Junctophilin-2 N-terminal fragment chain (JP2NT). In terms of processing, phosphorylation on Ser-165, probably by PKC, affects RYR1-mediated calcium ion release, interaction with TRPC3, and skeletal muscle myotubule development. In terms of tissue distribution, abundantly expressed in skeletal muscle and heart. Weak expression in stomach and lung.

The protein resides in the cell membrane. The protein localises to the sarcoplasmic reticulum membrane. It localises to the endoplasmic reticulum membrane. Its subcellular location is the nucleus. Membrane-binding protein that provides a structural bridge between the plasma membrane and the sarcoplasmic reticulum and is required for normal excitation-contraction coupling in cardiomyocytes. Provides a structural foundation for functional cross-talk between the cell surface and intracellular Ca(2+) release channels by maintaining the 12-15 nm gap between the sarcolemma and the sarcoplasmic reticulum membranes in the cardiac dyads. Necessary for proper intracellular Ca(2+) signaling in cardiac myocytes via its involvement in ryanodine receptor-mediated calcium ion release. Contributes to the construction of skeletal muscle triad junctions. In terms of biological role, transcription repressor required to safeguard against the deleterious effects of cardiac stress. Generated following cleavage of the Junctophilin-2 chain by calpain in response to cardiac stress in cardiomyocytes. Following cleavage and release from the membrane, translocates to the nucleus, binds DNA and represses expression of genes implicated in cell growth and differentiation, hypertrophy, inflammation and fibrosis. Modifies the transcription profile and thereby attenuates pathological remodeling in response to cardiac stress. Probably acts by competing with MEF2 transcription factors and TATA-binding proteins. This chain is Junctophilin-2, found in Mus musculus (Mouse).